The sequence spans 76 residues: Acyl carrier protein (76 aa).

Residues 2–76 (KDNFTRLQSI…QDVLNYLERN (75 aa)) enclose the Carrier domain. Ser37 carries the O-(pantetheine 4'-phosphoryl)serine modification.

It belongs to the acyl carrier protein (ACP) family. Post-translationally, 4'-phosphopantetheine is transferred from CoA to a specific serine of apo-ACP by AcpS. This modification is essential for activity because fatty acids are bound in thioester linkage to the sulfhydryl of the prosthetic group.

The protein resides in the plastid. Its subcellular location is the chloroplast. The protein operates within lipid metabolism; fatty acid biosynthesis. Its function is as follows. Carrier of the growing fatty acid chain in fatty acid biosynthesis. The chain is Acyl carrier protein from Phaeodactylum tricornutum (strain CCAP 1055/1).